Here is a 231-residue protein sequence, read N- to C-terminus: Urease subunit gamma/beta (231 aa).

The segment at 1–101 (MLLTPTELER…LVTVHQPIRP (101 aa)) is urease gamma. Positions 102 to 231 (GKLPLAVMPT…RARAQHFKGA (130 aa)) are urease beta.

This sequence in the N-terminal section; belongs to the urease gamma subunit family. In the C-terminal section; belongs to the urease beta subunit family. In terms of assembly, heterohexamer of 3 UreC (alpha) and 3 UreAB (gamma/beta) subunits.

It localises to the cytoplasm. It carries out the reaction urea + 2 H2O + H(+) = hydrogencarbonate + 2 NH4(+). Its pathway is nitrogen metabolism; urea degradation; CO(2) and NH(3) from urea (urease route): step 1/1. In Pseudomonas syringae pv. tomato (strain ATCC BAA-871 / DC3000), this protein is Urease subunit gamma/beta.